A 65-amino-acid chain; its full sequence is Large ribosomal subunit protein bL35 (65 aa).

The interval 1-22 (MPKLKTKSGAAKRFKKTGKGGF) is disordered.

It belongs to the bacterial ribosomal protein bL35 family.

The sequence is that of Large ribosomal subunit protein bL35 from Francisella philomiragia subsp. philomiragia (strain ATCC 25017 / CCUG 19701 / FSC 153 / O#319-036).